The sequence spans 436 residues: UPF0597 protein YhaM (436 aa).

The protein belongs to the UPF0597 family.

In Shigella dysenteriae serotype 1 (strain Sd197), this protein is UPF0597 protein YhaM.